A 216-amino-acid polypeptide reads, in one-letter code: V-type ATP synthase subunit D (216 aa).

The protein belongs to the V-ATPase D subunit family.

In terms of biological role, produces ATP from ADP in the presence of a proton gradient across the membrane. The chain is V-type ATP synthase subunit D from Clostridium novyi (strain NT).